The following is a 176-amino-acid chain: Mitochondrial inner membrane protein Mpv17 (176 aa).

Transmembrane regions (helical) follow at residues 18 to 38 (VQVLTAGSLMGLGDIISQQLV), 57 to 77 (LGCGFVGPVVGGWYRVLDHLI), 94 to 114 (GGFAPCFLGCFLPLVGVLNGM), and 131 to 151 (LITNYYLWPAVQLANFYLVPL).

Belongs to the peroxisomal membrane protein PXMP2/4 family.

It is found in the mitochondrion inner membrane. Functionally, non-selective channel that modulates the membrane potential under normal conditions and oxidative stress, and is involved in mitochondrial homeostasis. Involved in mitochondrial deoxynucleoside triphosphates (dNTP) pool homeostasis and mitochondrial DNA (mtDNA) maintenance. May be involved in the regulation of reactive oxygen species metabolism and the control of oxidative phosphorylation. The chain is Mitochondrial inner membrane protein Mpv17 from Rattus norvegicus (Rat).